The sequence spans 77 residues: Putative membrane protein insertion efficiency factor (77 aa).

Belongs to the UPF0161 family.

Its subcellular location is the cell membrane. Could be involved in insertion of integral membrane proteins into the membrane. In Geobacillus sp. (strain WCH70), this protein is Putative membrane protein insertion efficiency factor.